The sequence spans 532 residues: Phosphoenolpyruvate carboxykinase (ATP) (532 aa).

Arginine 60, tyrosine 194, and lysine 200 together coordinate substrate. Residues lysine 200, histidine 219, and 237–245 each bind ATP; that span reads GLSGTGKTT. Mn(2+)-binding residues include lysine 200 and histidine 219. Aspartate 258 contacts Mn(2+). The ATP site is built by glutamate 286, arginine 324, and threonine 449. Arginine 324 contacts substrate.

The protein belongs to the phosphoenolpyruvate carboxykinase (ATP) family. Mn(2+) serves as cofactor.

The protein localises to the cytoplasm. It catalyses the reaction oxaloacetate + ATP = phosphoenolpyruvate + ADP + CO2. It functions in the pathway carbohydrate biosynthesis; gluconeogenesis. Functionally, involved in the gluconeogenesis. Catalyzes the conversion of oxaloacetate (OAA) to phosphoenolpyruvate (PEP) through direct phosphoryl transfer between the nucleoside triphosphate and OAA. In Paracoccus denitrificans (strain Pd 1222), this protein is Phosphoenolpyruvate carboxykinase (ATP).